Consider the following 886-residue polypeptide: 3',5'-cyclic-AMP phosphodiesterase 4A (886 aa).

Positions 1-128 (MEPPTVPSER…GRSPLDSQAS (128 aa)) are disordered. Position 13 is a phosphoserine (Ser-13). Residues 36-46 (QPRTPIRIQQR) show a composition bias toward low complexity. The span at 51–78 (SAERAERERQPHRPIERADAMDTSDRPG) shows a compositional bias: basic and acidic residues. Residues 93-104 (TGTGSGGAGGGS) are compositionally biased toward gly residues. Gly-119 and Leu-123 each carry phosphoserine. The residue at position 152 (Ser-152) is a Phosphoserine; by MAPKAPK2. A phosphoserine mark is found at Ser-157, Ser-165, and Ser-209. Positions 294–331 (KQNEVEIPSPTMKEREKQQAPRPRPSQPPPPPVPHLQP) are disordered. Over residues 315–328 (RPRPSQPPPPPVPH) the composition is skewed to pro residues. A Phosphoserine modification is found at Ser-346. Residues 357–686 (VKTDQEELLA…DWYYSAIRQS (330 aa)) enclose the PDEase domain. Residue Lys-358 forms a Glycyl lysine isopeptide (Lys-Gly) (interchain with G-Cter in SUMO) linkage. His-433 acts as the Proton donor in catalysis. His-433 lines the 3',5'-cyclic AMP pocket. Residues His-433 and His-437 each coordinate AMP. Zn(2+) contacts are provided by His-437, His-473, Asp-474, and Asp-591. Positions 474, 591, 642, and 645 each coordinate AMP. Mg(2+) is bound at residue Asp-474. Mn(2+) is bound at residue Asp-474. Residues Gln-642 and Phe-645 each contribute to the 3',5'-cyclic AMP site. Disordered stretches follow at residues 682–705 (AIRQ…PLPD) and 866–886 (FGED…GDPT). Phosphoserine occurs at positions 686 and 688. The segment covering 876-886 (PGGGGSGGDPT) has biased composition (gly residues).

Belongs to the cyclic nucleotide phosphodiesterase family. PDE4 subfamily. Interacts with LYN (via SH3 domain). Interacts with ARRB2. Requires Zn(2+) as cofactor. Mg(2+) serves as cofactor. Mn(2+) is required as a cofactor. Proteolytically cleaved by CASP3. In terms of processing, phosphorylated at Ser-119 by PKA. In terms of tissue distribution, expressed in lymphoid cell subsets including CD8-positive T cells and T-helper 2 cells. Expressed in dendritic cells. Highly expressed in liver, stomach, testis, thyroid and adrenal glands and at a lower extent in placenta, kidney, pancreas, ovary, uterus and skin. Expressed in myeloid cell subsets including dendritic cells, monocytes, macrophages, eosinophils and mast cells. Expressed in natural killer cells. Expressed in bronchial smooth muscle. As to expression, expressed at high levels in the heart and small intestine. It is also found in the brain, kidney, spleen, colon, salivary gland, ovary and peripheral blood lymphocytes. In terms of tissue distribution, expressed predominantly in skeletal muscle and brain and at lower levels in the testis. Found in specific neuronal subpopulations including cortical pyramidal neurons, horn neurons in the spinal cord and Purkinje cells in cerebellum (at protein level).

The protein localises to the cytoplasm. Its subcellular location is the perinuclear region. It is found in the cell projection. The protein resides in the ruffle membrane. It localises to the cytosol. The protein localises to the membrane. The catalysed reaction is 3',5'-cyclic AMP + H2O = AMP + H(+). It participates in purine metabolism; 3',5'-cyclic AMP degradation; AMP from 3',5'-cyclic AMP: step 1/1. With respect to regulation, inhibited by rolipram, cilomilast, Ro 20-1724, roflumilast and denbufylline. Its activity is regulated as follows. Inhibited by rolipram. Inhibited by rolipram and cilomilast. Hydrolyzes the second messenger 3',5'-cyclic AMP (cAMP), which is a key regulator of many important physiological processes. Functionally, efficiently hydrolyzes cAMP. In terms of biological role, efficiently hydrolyzes cAMP. The phosphodiesterase activity is not affected by calcium, calmodulin or cyclic GMP (cGMP) levels. Does not hydrolyze cGMP. The sequence is that of 3',5'-cyclic-AMP phosphodiesterase 4A (PDE4A) from Homo sapiens (Human).